A 158-amino-acid chain; its full sequence is SsrA-binding protein (158 aa).

The tract at residues 131–158 (YDKRQTLRERQDKREADRAMSSHRRLGE) is disordered.

Belongs to the SmpB family.

The protein resides in the cytoplasm. Required for rescue of stalled ribosomes mediated by trans-translation. Binds to transfer-messenger RNA (tmRNA), required for stable association of tmRNA with ribosomes. tmRNA and SmpB together mimic tRNA shape, replacing the anticodon stem-loop with SmpB. tmRNA is encoded by the ssrA gene; the 2 termini fold to resemble tRNA(Ala) and it encodes a 'tag peptide', a short internal open reading frame. During trans-translation Ala-aminoacylated tmRNA acts like a tRNA, entering the A-site of stalled ribosomes, displacing the stalled mRNA. The ribosome then switches to translate the ORF on the tmRNA; the nascent peptide is terminated with the 'tag peptide' encoded by the tmRNA and targeted for degradation. The ribosome is freed to recommence translation, which seems to be the essential function of trans-translation. The chain is SsrA-binding protein from Clavibacter michiganensis subsp. michiganensis (strain NCPPB 382).